Consider the following 499-residue polypeptide: Glycerol kinase (499 aa).

Thr-14 is a binding site for ADP. Positions 14, 15, and 16 each coordinate ATP. Thr-14 lines the sn-glycerol 3-phosphate pocket. Arg-18 contacts ADP. Residues Arg-84, Glu-85, Tyr-136, and Asp-245 each coordinate sn-glycerol 3-phosphate. 5 residues coordinate glycerol: Arg-84, Glu-85, Tyr-136, Asp-245, and Gln-246. ADP-binding residues include Thr-267 and Gly-310. 4 residues coordinate ATP: Thr-267, Gly-310, Gln-314, and Gly-411. ADP-binding residues include Gly-411 and Asn-415.

It belongs to the FGGY kinase family.

The catalysed reaction is glycerol + ATP = sn-glycerol 3-phosphate + ADP + H(+). Its pathway is polyol metabolism; glycerol degradation via glycerol kinase pathway; sn-glycerol 3-phosphate from glycerol: step 1/1. Inhibited by fructose 1,6-bisphosphate (FBP). Its function is as follows. Key enzyme in the regulation of glycerol uptake and metabolism. Catalyzes the phosphorylation of glycerol to yield sn-glycerol 3-phosphate. In Nitrosomonas eutropha (strain DSM 101675 / C91 / Nm57), this protein is Glycerol kinase.